The primary structure comprises 172 residues: Adenine phosphoribosyltransferase (172 aa).

It belongs to the purine/pyrimidine phosphoribosyltransferase family. Homodimer.

It localises to the cytoplasm. The catalysed reaction is AMP + diphosphate = 5-phospho-alpha-D-ribose 1-diphosphate + adenine. The protein operates within purine metabolism; AMP biosynthesis via salvage pathway; AMP from adenine: step 1/1. Catalyzes a salvage reaction resulting in the formation of AMP, that is energically less costly than de novo synthesis. The polypeptide is Adenine phosphoribosyltransferase (Clostridium tetani (strain Massachusetts / E88)).